The sequence spans 428 residues: U2 small nuclear ribonucleoprotein auxiliary factor 35 kDa subunit-related protein 2-like (428 aa).

The disordered stretch occupies residues 1-51; the sequence is MASRQTAIPEKLSRKQYKAAMKKEKRKKRRQKMARLRALEAPPEEDDDVSA. Residues 23-35 show a composition bias toward basic residues; the sequence is KEKRKKRRQKMAR. The span at 42–51 shows a compositional bias: acidic residues; that stretch reads PPEEDDDVSA. S50 bears the Phosphoserine mark. A C3H1-type 1 zinc finger spans residues 157-185; that stretch reads EKYRPSCPFYNKTGACRFGNRCSRKHDFP. In terms of domain architecture, RRM spans 189 to 295; sequence PTLLVKSMFT…RQLQCEFCPV (107 aa). A C3H1-type 2 zinc finger spans residues 297–324; the sequence is RWKVAICGLFEMQKCPKGKHCNFLHVFR. Positions 339-428 are disordered; sequence MSPPAWTGSS…PGPQSQSHRT (90 aa). S340 carries the phosphoserine modification. Basic and acidic residues predominate over residues 351 to 366; it reads NSDRRERKDHHEEYYS. Low complexity predominate over residues 367–377; sequence KSRSYHSGSYH. Phosphoserine is present on S375. Positions 389–410 are enriched in basic residues; the sequence is SPHRWKKSHKQTTKSHERHSSR. Residues 419 to 428 are compositionally biased toward polar residues; the sequence is PGPQSQSHRT.

In terms of assembly, interacts with SF3B1. Interacts with ZCRB1. Highest expression levels are detected in the brain, and lower expression levels in other tissues like epididymis, testis, bone marrow or muscle. In testis, expressed in both Sertoli and spermatogenic cell.

The protein resides in the nucleus. Its function is as follows. Plays a role in splicing of the U12-type introns. Implicated also in removal of U2 introns positioned adjacent to a U12 intron. This Mus musculus (Mouse) protein is U2 small nuclear ribonucleoprotein auxiliary factor 35 kDa subunit-related protein 2-like.